Here is a 515-residue protein sequence, read N- to C-terminus: uncharacterized protein (515 aa).

The segment at 146–171 is disordered; sequence SSEVDRNSETEGTREENSNTSDWDEQ. The segment covering 148–162 has biased composition (basic and acidic residues); the sequence is EVDRNSETEGTREEN.

Its subcellular location is the cytoplasm. The protein resides in the nucleus. This is an uncharacterized protein from Schizosaccharomyces pombe (strain 972 / ATCC 24843) (Fission yeast).